We begin with the raw amino-acid sequence, 300 residues long: ESX-5 secretion-associated protein EspG5 (300 aa).

The protein belongs to the EspG family. As to quaternary structure, interacts specifically with ESX-5-dependent PE/PPE proteins. Forms a 1:1:1 heterotrimeric complex with the PE25/PPE41 dimer, via PPE41. Binding of EspG5 does not cause conformational changes in the PE25/PPE41 dimer. Forms a 1:1:1 heterotrimeric complex with the PE8/PPE15 dimer, via PPE15.

Its subcellular location is the cytoplasm. Its function is as follows. Specific chaperone for cognate PE/PPE proteins. Plays an important role in preventing aggregation of PE/PPE dimers. The protein is ESX-5 secretion-associated protein EspG5 of Mycobacterium tuberculosis (strain ATCC 25618 / H37Rv).